A 222-amino-acid polypeptide reads, in one-letter code: Germin-like protein subfamily 1 member 14 (222 aa).

The signal sequence occupies residues Met-1–Ala-22. A disulfide bridge connects residues Cys-32 and Cys-49. In terms of domain architecture, Cupin type-1 spans Ser-63–Lys-214. Asn-78 is a glycosylation site (N-linked (GlcNAc...) asparagine). Residues His-111, His-113, Glu-118, and His-160 each contribute to the Mn(2+) site.

This sequence belongs to the germin family. Oligomer (believed to be a pentamer but probably hexamer).

It is found in the secreted. Its subcellular location is the extracellular space. The protein resides in the apoplast. In terms of biological role, may play a role in plant defense. Probably has no oxalate oxidase activity even if the active site is conserved. The sequence is that of Germin-like protein subfamily 1 member 14 from Arabidopsis thaliana (Mouse-ear cress).